The primary structure comprises 726 residues: Dipeptidyl-peptidase 5 (726 aa).

The first 19 residues, 1–19 (MAPAKWLIASLAFASTGLA), serve as a signal peptide directing secretion. Asparagine 96 and asparagine 252 each carry an N-linked (GlcNAc...) asparagine glycan. The disordered stretch occupies residues 268–292 (VAEPINKRNGPRTPHGIEGASSSPV). Residue asparagine 485 is glycosylated (N-linked (GlcNAc...) asparagine). Residue serine 558 is the Charge relay system of the active site. N-linked (GlcNAc...) asparagine glycosylation is present at asparagine 605. Catalysis depends on charge relay system residues aspartate 641 and histidine 673. An N-linked (GlcNAc...) asparagine glycan is attached at asparagine 699.

Belongs to the peptidase S9C family.

It localises to the secreted. In terms of biological role, extracellular dipeptidyl-peptidase which removes N-terminal dipeptides sequentially from polypeptides having unsubstituted N-termini. Contributes to pathogenicity. The polypeptide is Dipeptidyl-peptidase 5 (DPP5) (Arthroderma otae (Microsporum canis)).